We begin with the raw amino-acid sequence, 120 residues long: Putative ankyrin repeat protein RBE_1215 (120 aa).

ANK repeat units lie at residues 22–52 (DGGNALHVACGAGGSLKMVKFLVENNILTNI) and 59–88 (FGDTPLTLAISYDHHDIVDYFKQKFNITSV).

This is Putative ankyrin repeat protein RBE_1215 from Rickettsia bellii (strain RML369-C).